Reading from the N-terminus, the 253-residue chain is Aminoglycoside nucleotidyltransferase (4') (253 aa).

Residues 1–127 (MNGPIIMTRE…KVYQTAKSVE (127 aa)) form an N-terminal domain region. 5 residues coordinate ATP: S39, R42, S49, D50, and E52. 2 residues coordinate Mg(2+): D50 and E52. Neomycin B is bound by residues E52 and E67. Positions 67, 74, 76, 141, and 145 each coordinate kanamycin A. The segment at 128 to 241 (AQTFHDAICA…NGIQEWTERH (114 aa)) is C-terminal domain. ATP-binding residues include E145, K149, and T187. E145 provides a ligand contact to Mg(2+). The Proton acceptor role is filled by E145.

Homodimer. It depends on Mg(2+) as a cofactor.

It catalyses the reaction amikacin + ATP = 4'-adenylylamikacin + diphosphate. The catalysed reaction is kanamycin A + ATP = 4'-adenylylkanamycin A + diphosphate. The enzyme catalyses neomycin B + ATP = 4'-adenylylneomycin B + diphosphate. It carries out the reaction paromomycin + ATP = 4'-adenylylparomomycin + diphosphate. It catalyses the reaction ribostamycin + ATP = 4'-adenylylribostamycin + diphosphate. The catalysed reaction is tobramycin + ATP = 4'-adenylyltobramycin + diphosphate. The enzyme catalyses kanamycin A + CTP = 4'-cytidylylkanamycin A + diphosphate. It carries out the reaction kanamycin A + GTP = 4'-guanylylkanamycin A + diphosphate. It catalyses the reaction kanamycin A + ITP = 4'-inosinylylkanamycin A + diphosphate. The catalysed reaction is dTTP + kanamycin A = 4'-thymidylylkanamycin A + diphosphate. The enzyme catalyses kanamycin A + UTP = 4'-uridylylkanamycin A + diphosphate. It carries out the reaction kanamycin A + dATP = 4'-(2'-deoxyadenylyl)kanamycin A + diphosphate. It catalyses the reaction kanamycin A + dCTP = 4'-(2'-deoxycytidylyl)kanamycin A + diphosphate. The catalysed reaction is kanamycin A + dGTP = 4'-(2'-deoxyguanylyl)kanamycin A + diphosphate. The enzyme catalyses dUTP + kanamycin A = 4'-(2'-deoxyuridylyl)kanamycin A + diphosphate. It carries out the reaction amikacin + GTP = 4'-guanylylamikacin + diphosphate. It catalyses the reaction amikacin + ITP = 4'-inosinylylamikacin + diphosphate. The catalysed reaction is amikacin + CTP = 4'-cytidylylamikacin + diphosphate. The enzyme catalyses amikacin + UTP = 4'-uridylylamikacin + diphosphate. It carries out the reaction amikacin + dTTP = 4'-thymidylylamikacin + diphosphate. In terms of biological role, inactivates aminoglycoside antibiotics such as kanamycin by catalyzing the transfer of a nucleotidyl group from a wide variety of nucleoside triphosphates ((d)ATP, (d)CTP, (d)GTP, ITP, TTP and (d)UTP) to the 4'-hydroxyl group of the aminoglycoside. In vitro, antibiotics without the 4'-hydroxyl but possessing a 4''-hydroxyl group (e.g. sisomicin and gentamicin) are also modifed but with poor specificity. The 3' position of the NTP ribose ring does not tolerate large substitutions (e.g. ddATP) and dNTPs and TTP are better substrates than their NTP counterparts. A short (2.35 Angstrom) hydrogen bond initially facilitates tight binding of the substrate (between Glu-52 and antibiotic) that is subsequently disrupted by the assembly of the active ternary complex. This enables the release of products post-catalysis, a 'catch and release' mechanism. In Staphylococcus aureus, this protein is Aminoglycoside nucleotidyltransferase (4') (knt).